The chain runs to 942 residues: MEANAGDEGIHFQNYPFDFLEFLNHQRFEPMELYNHHEHAKAVAALPCAPPQYEYNHQTQPNHVQFASTSTSKPKEFKVEAPPSSSLSPSKKPDIATTQQFNNQPPITTTQTIFDSTFNAAQWGIVDLSSHQHLFNNLKRSLPVAQQLPAEDENKDDKNYFRRLKYLIDRRFPCTVCQKSFKQSSHLVQHMLVHTGERPYECNTCGRTYNHISSLIRHRRCHKEETEAEVTNSVPPPDGEAAAAAAVVAAAAAAMSEAAAGSAEMPVTGSEQSIPLPQDGPFTCTLCWKVFKKQSHLHQHQIIHTGEKPFSCSVCAKSFNRRESLKRHVKTHSDSMKVQCEVCGKSFRDTSYLLKHQATHTGERPDYKCELCGKSYAAPQSLLRHKQVHEQGLALQQPMVQQQQPLSEVIKEPTSSVTIEAASLLGTDVSNVGPAAISVIGKIGSFFSQSSLQKPPSVINNANKNFCCNVCGRGFGRRETLKRHERIHTGEKPHQCSVCGKRFRESFHLTKHHVVHTRERPYKCELCGKVFGYPQSLTRHKQIHRLQLPCTVATGTLPPDRLTFGCTDCGERFPDSFHLMNHKELHMNEKPYVCDTCGKCFGFIENLMWHKLVHQTAAERLHPISQCQDVAESQQVNCLETTAPSDVSGAEVAAAAAAAGVVASPFEEHPVVPSGERFSCSICGQSFKHFLGLVTHKYVHLVRRTLACNVCGQNFAGAYDLLLHRRTHLQKRHFTCSVCGKRFWEAALLMRHQRCHTEERPYRCTICGRGFLHSWYLRQHKVVHTGERAYKCALCNKRFAQSSSLAEHQRLHIVARPQRCPTCGKTFRYRSNLLEHQRVHLGEKVYRCDQCGKSFFYISSILRHQRSHDAKPDLRCSCCLKLFKDPKYFSKHVQTHQGGRPFKCGACGEAFSNTYGLKKHRHAHKMERLAAAAALVEGQKTL.

The segment at 66–106 (FASTSTSKPKEFKVEAPPSSSLSPSKKPDIATTQQFNNQPP) is disordered. Polar residues predominate over residues 96–106 (ATTQQFNNQPP). 20 consecutive C2H2-type zinc fingers follow at residues 172-194 (FPCTVCQKSFKQSSHLVQHMLVH), 200-222 (YECNTCGRTYNHISSLIRHRRCH), 282-304 (FTCTLCWKVFKKQSHLHQHQIIH), 310-332 (FSCSVCAKSFNRRESLKRHVKTH), 338-360 (VQCEVCGKSFRDTSYLLKHQATH), 367-389 (YKCELCGKSYAAPQSLLRHKQVH), 466-488 (FCCNVCGRGFGRRETLKRHERIH), 494-516 (HQCSVCGKRFRESFHLTKHHVVH), 522-544 (YKCELCGKVFGYPQSLTRHKQIH), 564-586 (FGCTDCGERFPDSFHLMNHKELH), 592-614 (YVCDTCGKCFGFIENLMWHKLVH), 678-700 (FSCSICGQSFKHFLGLVTHKYVH), 706-728 (LACNVCGQNFAGAYDLLLHRRTH), 734-756 (FTCSVCGKRFWEAALLMRHQRCH), 762-784 (YRCTICGRGFLHSWYLRQHKVVH), 790-812 (YKCALCNKRFAQSSSLAEHQRLH), 818-840 (QRCPTCGKTFRYRSNLLEHQRVH), 846-868 (YRCDQCGKSFFYISSILRHQRSH), 874-896 (LRCSCCLKLFKDPKYFSKHVQTH), and 902-924 (FKCGACGEAFSNTYGLKKHRHAH).

Belongs to the krueppel C2H2-type zinc-finger protein family.

It localises to the nucleus. Functionally, may be involved in transcriptional regulation. In Xenopus tropicalis (Western clawed frog), this protein is Zinc finger protein 865 (znf865).